The primary structure comprises 133 residues: ATP synthase epsilon chain, chloroplastic (133 aa).

This sequence belongs to the ATPase epsilon chain family. As to quaternary structure, F-type ATPases have 2 components, CF(1) - the catalytic core - and CF(0) - the membrane proton channel. CF(1) has five subunits: alpha(3), beta(3), gamma(1), delta(1), epsilon(1). CF(0) has three main subunits: a, b and c.

It is found in the plastid. The protein resides in the chloroplast thylakoid membrane. Produces ATP from ADP in the presence of a proton gradient across the membrane. This Morus indica (Mulberry) protein is ATP synthase epsilon chain, chloroplastic.